The following is a 213-amino-acid chain: U1 small nuclear ribonucleoprotein C (213 aa).

A Matrin-type zinc finger spans residues 4–36 (YYCDYCDTYLTHDSPSVRKQHNAGYKHKANVRS). Over residues 143-166 (APSMPMPPLNSLPRPPTMNVPPAV) the composition is skewed to pro residues. Residues 143 to 213 (APSMPMPPLN…INAQGPEANH (71 aa)) form a disordered region. Residues 167 to 180 (PGSTSTPTSGGAPS) show a composition bias toward low complexity.

The protein belongs to the U1 small nuclear ribonucleoprotein C family. In terms of assembly, U1 snRNP is composed of the 7 core Sm proteins B/B', D1, D2, D3, E, F and G that assemble in a heptameric protein ring on the Sm site of the small nuclear RNA to form the core snRNP, and at least 3 U1 snRNP-specific proteins U1-70K, U1-A and U1-C. U1-C interacts with U1 snRNA and the 5' splice-site region of the pre-mRNA.

It localises to the nucleus. In terms of biological role, component of the spliceosomal U1 snRNP, which is essential for recognition of the pre-mRNA 5' splice-site and the subsequent assembly of the spliceosome. U1-C is directly involved in initial 5' splice-site recognition for both constitutive and regulated alternative splicing. The interaction with the 5' splice-site seems to precede base-pairing between the pre-mRNA and the U1 snRNA. Stimulates commitment or early (E) complex formation by stabilizing the base pairing of the 5' end of the U1 snRNA and the 5' splice-site region. The protein is U1 small nuclear ribonucleoprotein C of Vitis vinifera (Grape).